Consider the following 493-residue polypeptide: Glycylpeptide N-tetradecanoyltransferase (493 aa).

Residue 45-48 coordinates tetradecanoyl-CoA; the sequence is HKFW. Positions 53–73 are disordered; it reads VPQITGSGAPAPIEEGPIDDP. Tetradecanoyl-CoA-binding positions include 182–184 and 190–194; these read LCV and SKRLA. Catalysis depends on Leu-493, which acts as the Proton acceptor; via carboxylate.

Belongs to the NMT family. Monomer.

The protein localises to the cytoplasm. The catalysed reaction is N-terminal glycyl-[protein] + tetradecanoyl-CoA = N-tetradecanoylglycyl-[protein] + CoA + H(+). In terms of biological role, adds a myristoyl group to the N-terminal glycine residue of certain cellular proteins. The protein is Glycylpeptide N-tetradecanoyltransferase of Cryptococcus neoformans var. neoformans serotype D (strain B-3501A) (Filobasidiella neoformans).